Reading from the N-terminus, the 102-residue chain is Small ribosomal subunit protein uS10 (102 aa).

This sequence belongs to the universal ribosomal protein uS10 family. Part of the 30S ribosomal subunit.

In terms of biological role, involved in the binding of tRNA to the ribosomes. This is Small ribosomal subunit protein uS10 from Methanothermobacter thermautotrophicus (strain ATCC 29096 / DSM 1053 / JCM 10044 / NBRC 100330 / Delta H) (Methanobacterium thermoautotrophicum).